The primary structure comprises 428 residues: D-amino acid dehydrogenase (428 aa).

3 to 17 (VVVLGSGVVGVASAY) serves as a coordination point for FAD.

Belongs to the DadA oxidoreductase family. FAD is required as a cofactor.

The enzyme catalyses a D-alpha-amino acid + A + H2O = a 2-oxocarboxylate + AH2 + NH4(+). The protein operates within amino-acid degradation; D-alanine degradation; NH(3) and pyruvate from D-alanine: step 1/1. In terms of biological role, oxidative deamination of D-amino acids. This is D-amino acid dehydrogenase from Burkholderia ambifaria (strain MC40-6).